The chain runs to 72 residues: Translation initiation factor IF-1 2 (72 aa).

The 72-residue stretch at 1-72 (MAKDDVIQMQ…SRARIVFRTK (72 aa)) folds into the S1-like domain.

The protein belongs to the IF-1 family. In terms of assembly, component of the 30S ribosomal translation pre-initiation complex which assembles on the 30S ribosome in the order IF-2 and IF-3, IF-1 and N-formylmethionyl-tRNA(fMet); mRNA recruitment can occur at any time during PIC assembly.

It is found in the cytoplasm. Its function is as follows. One of the essential components for the initiation of protein synthesis. Stabilizes the binding of IF-2 and IF-3 on the 30S subunit to which N-formylmethionyl-tRNA(fMet) subsequently binds. Helps modulate mRNA selection, yielding the 30S pre-initiation complex (PIC). Upon addition of the 50S ribosomal subunit IF-1, IF-2 and IF-3 are released leaving the mature 70S translation initiation complex. The protein is Translation initiation factor IF-1 2 of Cupriavidus necator (strain ATCC 17699 / DSM 428 / KCTC 22496 / NCIMB 10442 / H16 / Stanier 337) (Ralstonia eutropha).